The following is a 67-amino-acid chain: Small integral membrane protein 20 (67 aa).

Residues 1-6 (MSRNLR) lie on the Mitochondrial matrix side of the membrane. The helical transmembrane segment at 7–27 (TALIFGGFISLIGAAFYPIYF) threads the bilayer. Residues 28-67 (RPLMRLEEYKKEQAINRAGIVQEDVQPPGLKVWSDPFGRK) lie on the Mitochondrial intermembrane side of the membrane. The residue at position 64 (F64) is a Phenylalanine amide.

As to quaternary structure, component of the MITRAC (mitochondrial translation regulation assembly intermediate of cytochrome c oxidase complex) complex, the core components of this complex being COA3/MITRAC12 and COX14. Interacts with COA3/MITRAC12 and COX4I1. Directly interacts with newly synthesized MT-CO1/COX1. As to expression, expressed in the ovary, specifically in granulosa cells of follicles that have passed the primary stage and in oocytes (at protein level).

Its subcellular location is the mitochondrion inner membrane. It is found in the secreted. Its function is as follows. Component of the MITRAC (mitochondrial translation regulation assembly intermediate of cytochrome c oxidase complex) complex, that regulates cytochrome c oxidase assembly. Promotes the progression of complex assembly after the association of MT-CO1/COX1 with COX4I1 and COX6C. Chaperone-like assembly factor required to stabilize newly synthesized MT-CO1/COX1 and to prevent its premature turnover. In terms of biological role, peptide involved in a broad spectrum of regulatory functions. Is a ligand for GPR173. As part of the reproductive cycle, it regulates gonadotropin-releasing hormone (GnRH) signaling in the hypothalamus and pituitary gland which augments the release of luteinizing hormone. Plays a protective role in memory retention through activation of GNRHR. Regulates the secretion of AVP by hypothalamic neurons. Plays a role in the transduction of the itch sensation. Induces anxiolytic effects, reducing behavior associated with anxiety. Regulates food intake as well as satiation and satiety. In the ovary, it regulates follicular growth by stimulating granulosa cell proliferation by increasing the expression of GPR173, CREB1, CYP19A1, KITLG, FSHR, and LHCGR. It also increases the production of estradiol (E2). In the heart, it regulates contractility and relaxation. It also plays a cardioprotective role during ischemia, where it activates the SAFE and RISK pathways. Stimulates the proliferation and differentiation of preadipocytes. In pancreatic islet cells, it induces proliferation of islet cells as well as the production of INS. The sequence is that of Small integral membrane protein 20 (SMIM20) from Homo sapiens (Human).